Consider the following 497-residue polypeptide: Serine hydroxymethyltransferase (497 aa).

Residues leucine 176 and 180-182 (GHL) contribute to the (6S)-5,6,7,8-tetrahydrofolate site. Residue lysine 289 is modified to N6-(pyridoxal phosphate)lysine. Glutamate 306 serves as a coordination point for (6S)-5,6,7,8-tetrahydrofolate.

It belongs to the SHMT family. In terms of assembly, homodimer. It depends on pyridoxal 5'-phosphate as a cofactor.

It is found in the cytoplasm. It catalyses the reaction (6R)-5,10-methylene-5,6,7,8-tetrahydrofolate + glycine + H2O = (6S)-5,6,7,8-tetrahydrofolate + L-serine. Its pathway is one-carbon metabolism; tetrahydrofolate interconversion. It participates in amino-acid biosynthesis; glycine biosynthesis; glycine from L-serine: step 1/1. In terms of biological role, catalyzes the reversible interconversion of serine and glycine with tetrahydrofolate (THF) serving as the one-carbon carrier. This reaction serves as the major source of one-carbon groups required for the biosynthesis of purines, thymidylate, methionine, and other important biomolecules. Also exhibits THF-independent aldolase activity toward beta-hydroxyamino acids, producing glycine and aldehydes, via a retro-aldol mechanism. This chain is Serine hydroxymethyltransferase, found in Chlamydia pneumoniae (Chlamydophila pneumoniae).